An 83-amino-acid chain; its full sequence is UPF0248 protein PH1212.1 (83 aa).

Belongs to the UPF0248 family.

In Pyrococcus horikoshii (strain ATCC 700860 / DSM 12428 / JCM 9974 / NBRC 100139 / OT-3), this protein is UPF0248 protein PH1212.1.